A 44-amino-acid chain; its full sequence is MQAKAPMYPNEPFLVFWNAPTTQCRLRYKVDLDLNTFHIVTNAR.

It belongs to the glycosyl hydrolase 56 family. Monomer. Post-translationally, contains disulfide bonds. Glycosylated. As to expression, expressed by the venom gland.

It is found in the secreted. The catalysed reaction is Random hydrolysis of (1-&gt;4)-linkages between N-acetyl-beta-D-glucosamine and D-glucuronate residues in hyaluronate.. Functionally, snake venom endo-hyaluronidase that degrades hyaluronan to smaller oligosaccharide fragments. In venom, it is not toxic by itself, but increases the diffusion of other venom proteins such as crotoxin (a neurotoxic and myotoxic PLA2) by degrading the extracellular matrix. In addition, it displays antiedematogenic activity, since it significantly diminishes the oedematogenic activity of crotoxin (probably by direct substrate hydrolysis, since hyaluronan possesses strong water-binding capacity). In Crotalus durissus terrificus (South American rattlesnake), this protein is Hyaluronidase CdtHya1.